The following is a 1178-amino-acid chain: Phytochrome B (1178 aa).

The segment covering 1–15 (MASGSRATPTRSPSS) has biased composition (polar residues). A disordered region spans residues 1 to 58 (MASGSRATPTRSPSSARPEAPRHAHHHHHHHSQSSGGSTSRAGGGGGGGGGGGGTAAT). Residues 23–32 (HAHHHHHHHS) are compositionally biased toward basic residues. Over residues 42–55 (AGGGGGGGGGGGGT) the composition is skewed to gly residues. The region spanning 267–449 (DIKLLCDTVV…AFGLQLNMEL (183 aa)) is the GAF domain. Residue Cys-372 participates in phytochromobilin binding. 2 PAS domains span residues 668 to 739 (VARE…LRGE) and 802 to 873 (DYKA…MVVI). Residues 950–1170 (YICQEIKNPL…LIVLELPQPR (221 aa)) enclose the Histidine kinase domain.

Belongs to the phytochrome family. Homodimer. Contains one covalently linked phytochromobilin chromophore.

Its function is as follows. Regulatory photoreceptor which exists in two forms that are reversibly interconvertible by light: the Pr form that absorbs maximally in the red region of the spectrum and the Pfr form that absorbs maximally in the far-red region. Photoconversion of Pr to Pfr induces an array of morphogenic responses, whereas reconversion of Pfr to Pr cancels the induction of those responses. Pfr controls the expression of a number of nuclear genes including those encoding the small subunit of ribulose-bisphosphate carboxylase, chlorophyll A/B binding protein, protochlorophyllide reductase, rRNA, etc. It also controls the expression of its own gene(s) in a negative feedback fashion. This is Phytochrome B (PHYB) from Sorghum bicolor (Sorghum).